Here is a 252-residue protein sequence, read N- to C-terminus: 2-succinyl-6-hydroxy-2,4-cyclohexadiene-1-carboxylate synthase (252 aa).

It belongs to the AB hydrolase superfamily. MenH family. In terms of assembly, monomer.

The catalysed reaction is 5-enolpyruvoyl-6-hydroxy-2-succinyl-cyclohex-3-ene-1-carboxylate = (1R,6R)-6-hydroxy-2-succinyl-cyclohexa-2,4-diene-1-carboxylate + pyruvate. The protein operates within quinol/quinone metabolism; 1,4-dihydroxy-2-naphthoate biosynthesis; 1,4-dihydroxy-2-naphthoate from chorismate: step 3/7. Its pathway is quinol/quinone metabolism; menaquinone biosynthesis. Catalyzes a proton abstraction reaction that results in 2,5-elimination of pyruvate from 2-succinyl-5-enolpyruvyl-6-hydroxy-3-cyclohexene-1-carboxylate (SEPHCHC) and the formation of 2-succinyl-6-hydroxy-2,4-cyclohexadiene-1-carboxylate (SHCHC). The sequence is that of 2-succinyl-6-hydroxy-2,4-cyclohexadiene-1-carboxylate synthase from Salmonella paratyphi A (strain ATCC 9150 / SARB42).